We begin with the raw amino-acid sequence, 216 residues long: Ribosomal RNA large subunit methyltransferase E (216 aa).

Positions 60, 62, 80, 96, and 121 each coordinate S-adenosyl-L-methionine. Lys161 serves as the catalytic Proton acceptor.

The protein belongs to the class I-like SAM-binding methyltransferase superfamily. RNA methyltransferase RlmE family.

Its subcellular location is the cytoplasm. The enzyme catalyses uridine(2552) in 23S rRNA + S-adenosyl-L-methionine = 2'-O-methyluridine(2552) in 23S rRNA + S-adenosyl-L-homocysteine + H(+). Its function is as follows. Specifically methylates the uridine in position 2552 of 23S rRNA at the 2'-O position of the ribose in the fully assembled 50S ribosomal subunit. The chain is Ribosomal RNA large subunit methyltransferase E from Pseudomonas syringae pv. syringae (strain B728a).